A 208-amino-acid chain; its full sequence is MAGTARHDREMAIQSKKKLSTATDPIERLRLQCLARGSAGIKGLGRVFRIMDDNNNRTLDFKEFLKGLNDYAVVMEKEEAEELFQRFDRDGSGTIDFNEFLLTLRPPMSRARKEVIMKAFRKLDKTGDGVITIEDLREVYNAKHHPKYQNGEWTEEQVFRKFLDNFDSPYDKDGLVTPEEFMNYYAGVSASIDTDVYFIIMMTTAWKL.

4 EF-hand domains span residues 39–74 (AGIK…YAVV), 75–110 (MEKE…PMSR), 111–146 (ARKE…KHHP), and 154–191 (TEEQ…VSAS). Residues D52, N54, N56, T58, E63, D88, D90, S92, T94, and E99 each contribute to the Ca(2+) site.

It is found in the cytoplasm. This is Calcyphosin-like protein (Capsl) from Mus musculus (Mouse).